The primary structure comprises 333 residues: Lipoyl synthase (333 aa).

Positions 1–29 (MTDSAAGATEVATPATPSNKPYDATAKQK) are disordered. The [4Fe-4S] cluster site is built by C80, C85, C91, C106, C110, C113, and S320. Residues 91 to 309 (CFGKGTATFM…EEKAYEMGFT (219 aa)) form the Radical SAM core domain.

It belongs to the radical SAM superfamily. Lipoyl synthase family. [4Fe-4S] cluster is required as a cofactor.

The protein resides in the cytoplasm. The catalysed reaction is [[Fe-S] cluster scaffold protein carrying a second [4Fe-4S](2+) cluster] + N(6)-octanoyl-L-lysyl-[protein] + 2 oxidized [2Fe-2S]-[ferredoxin] + 2 S-adenosyl-L-methionine + 4 H(+) = [[Fe-S] cluster scaffold protein] + N(6)-[(R)-dihydrolipoyl]-L-lysyl-[protein] + 4 Fe(3+) + 2 hydrogen sulfide + 2 5'-deoxyadenosine + 2 L-methionine + 2 reduced [2Fe-2S]-[ferredoxin]. It functions in the pathway protein modification; protein lipoylation via endogenous pathway; protein N(6)-(lipoyl)lysine from octanoyl-[acyl-carrier-protein]: step 2/2. In terms of biological role, catalyzes the radical-mediated insertion of two sulfur atoms into the C-6 and C-8 positions of the octanoyl moiety bound to the lipoyl domains of lipoate-dependent enzymes, thereby converting the octanoylated domains into lipoylated derivatives. In Ralstonia pickettii (strain 12J), this protein is Lipoyl synthase.